Here is a 376-residue protein sequence, read N- to C-terminus: Succinyl-diaminopimelate desuccinylase (376 aa).

H66 provides a ligand contact to Zn(2+). Residue D68 is part of the active site. D99 provides a ligand contact to Zn(2+). E133 serves as the catalytic Proton acceptor. Zn(2+)-binding residues include E134, E162, and H348.

This sequence belongs to the peptidase M20A family. DapE subfamily. Homodimer. Requires Zn(2+) as cofactor. Co(2+) is required as a cofactor.

The catalysed reaction is N-succinyl-(2S,6S)-2,6-diaminopimelate + H2O = (2S,6S)-2,6-diaminopimelate + succinate. The protein operates within amino-acid biosynthesis; L-lysine biosynthesis via DAP pathway; LL-2,6-diaminopimelate from (S)-tetrahydrodipicolinate (succinylase route): step 3/3. Catalyzes the hydrolysis of N-succinyl-L,L-diaminopimelic acid (SDAP), forming succinate and LL-2,6-diaminopimelate (DAP), an intermediate involved in the bacterial biosynthesis of lysine and meso-diaminopimelic acid, an essential component of bacterial cell walls. This is Succinyl-diaminopimelate desuccinylase from Xanthomonas oryzae pv. oryzae (strain PXO99A).